Here is an 809-residue protein sequence, read N- to C-terminus: MYEALPGPAPENEDGLVKVKEEDPTWEQVCNSQEGSSHTQEICRLRFRHFCYQEAHGPQEALAQLRELCHQWLRPEMHTKEQIMELLVLEQFLTILPKELQPCVKTYPLESGEEAVTVLENLETGSGDTGQQASVYIQGQDMHPMVAEYQGVSLECQSLQLLPGITTLKCEPPQRPQGNPQEVSGPVPHGSAHLQEKNPRDKAVVPVFNPVRSQTLVKTEEETAQAVAAEKWSHLSLTRRNLCGNSAQETVMSLSPMTEEIVTKDRLFKAKQETSEEMEQSGEASGKPNRECAPQIPCSTPIATERTVAHLNTLKDRHPGDLWARMHISSLEYAAGDITRKGRKKDKARVSELLQGLSFSGDSDVEKDNEPEIQPAQKKLKVSCFPEKSWTKRDIKPNFPSWSALDSGLLNLKSEKLNPVELFELFFDDETFNLIVNETNNYASQKNVSLEVTVQEMRCVFGVLLLSGFMRHPRREMYWEVSDTDQNLVRDAIRRDRFELIFSNLHFADNGHLDQKDKFTKLRPLIKQMNKNFLLYAPLEEYYCFDKSMCECFDSDQFLNGKPIRIGYKIWCGTTTQGYLVWFEPYQEESTMKVDEDPDLGLGGNLVMNFADVLLERGQYPYHLCFDSFFTSVKLLSALKKKGVRATGTIRENRTEKCPLMNVEHMKKMKRGYFDFRIEENNEIILCRWYGDGIISLCSNAVGIEPVNEVSCCDADNEEIPQISQPSIVKVYDECKEGVAKMDQIISKYRVRIRSKKWYSILVSYMIDVAMNNAWQLHRACNPGASLDPLDFRRFVAHFYLEHNAHLSD.

The SCAN box domain maps to 44–126 (RLRFRHFCYQ…TVLENLETGS (83 aa)). A disordered region spans residues 170–199 (CEPPQRPQGNPQEVSGPVPHGSAHLQEKNP). K218 is covalently cross-linked (Glycyl lysine isopeptide (Lys-Gly) (interchain with G-Cter in SUMO2)). The interval 271-297 (KQETSEEMEQSGEASGKPNRECAPQIP) is disordered. S360 bears the Phosphoserine mark.

The chain is PiggyBac transposable element-derived protein 1 (PGBD1) from Homo sapiens (Human).